A 384-amino-acid polypeptide reads, in one-letter code: MFEPIELTSDAVIRVVGIGGGGGNAVEHMVRECIEGVDFFAVNTDAQALRKTEVSQTVQIGSSITKGLGAGANPEVGKNSAEEDKDALRIILDGADMVFIASGMGGGTGTGAAPVIAEIAKDLGILTVAVVTKPFNFEGKKRLIFAEQGIDELSKHVDSLIIIPNDKLLKVLGKGISLLDAFSAANDVLKNAVQGIAELITRPGLINVDFADVKTVMSEMGYAMMGSGISKGDNRAEESSEIAISSPLLEDIDLSGARGVLVNITAGFDLRLDEFEAVGNKVRSFSSDNATVVIGTSLDPSMNDELRVTVVATGIGMDKRPDIKLVTNSTSNKNIMDRFGYRYSDKENTMSKNNNEFSKIKNKTKEDLQSDYLEIPAFLRNQAD.

Residues 20–24 (GGGGN), 107–109 (GTG), E138, R142, and N186 contribute to the GTP site.

This sequence belongs to the FtsZ family. In terms of assembly, homodimer. Polymerizes to form a dynamic ring structure in a strictly GTP-dependent manner. Interacts directly with several other division proteins.

Its subcellular location is the cytoplasm. Functionally, essential cell division protein that forms a contractile ring structure (Z ring) at the future cell division site. The regulation of the ring assembly controls the timing and the location of cell division. One of the functions of the FtsZ ring is to recruit other cell division proteins to the septum to produce a new cell wall between the dividing cells. Binds GTP and shows GTPase activity. This Wigglesworthia glossinidia brevipalpis protein is Cell division protein FtsZ.